Consider the following 317-residue polypeptide: 4-diphosphocytidyl-2-C-methyl-D-erythritol kinase (317 aa).

Lysine 11 is a catalytic residue. Residue 99–109 (PVAAGLAGGST) coordinates ATP. The active site involves aspartate 141.

Belongs to the GHMP kinase family. IspE subfamily.

The catalysed reaction is 4-CDP-2-C-methyl-D-erythritol + ATP = 4-CDP-2-C-methyl-D-erythritol 2-phosphate + ADP + H(+). It functions in the pathway isoprenoid biosynthesis; isopentenyl diphosphate biosynthesis via DXP pathway; isopentenyl diphosphate from 1-deoxy-D-xylulose 5-phosphate: step 3/6. Catalyzes the phosphorylation of the position 2 hydroxy group of 4-diphosphocytidyl-2C-methyl-D-erythritol. The polypeptide is 4-diphosphocytidyl-2-C-methyl-D-erythritol kinase (Nostoc punctiforme (strain ATCC 29133 / PCC 73102)).